We begin with the raw amino-acid sequence, 942 residues long: Mitogen-activated protein kinase kinase kinase 14 (942 aa).

Over residues 136–152 (GKRHGKARKKRRKKRSK) the composition is skewed to basic residues. Disordered regions lie at residues 136-156 (GKRHGKARKKRRKKRSKSLAQ) and 291-326 (VSGQRPLPGPPHLSQLAHGDSQKPLPGPHLESSCPS). The 256-residue stretch at 402-657 (MTHQPRVGRG…ELRRKVGKAL (256 aa)) folds into the Protein kinase domain. The interaction with ZFP91 stretch occupies residues 403–655 (THQPRVGRGS…AMELRRKVGK (253 aa)). ATP contacts are provided by residues 408-416 (VGRGSFGEV) and Lys-431. Asp-517 functions as the Proton acceptor in the catalytic mechanism. Residue Thr-561 is modified to Phosphothreonine. 2 disordered regions span residues 660-756 (VGGL…FPDR) and 801-823 (SDDSEKNPSKASQSSRDTLSSGV). Over residues 707-720 (EPQPPLPPEPPEPS) the composition is skewed to pro residues. A compositionally biased stretch (polar residues) spans 809–823 (SKASQSSRDTLSSGV).

This sequence belongs to the protein kinase superfamily. STE Ser/Thr protein kinase family. MAP kinase kinase kinase subfamily. In terms of assembly, interacts with TRAF2, TRAF3, TRAF5, TRAF6, IKKA and NF-kappa-B2/P100. Interacts with PELI3. Interacts with NIBP; the interaction is direct. Interacts with ARRB1 and ARRB2. Interacts with GRB10. Interacts with ZFP91. Interacts with NLRP12; this interaction promotes proteasomal degradation of MAP3K14. Directly interacts with DDX3X. Interacts (via C-terminus and kinase domain) with PPPC3A (via N-terminus) and PPP3CB. Phosphorylation at Thr-561 is required to activate its kinase activity and 'Lys-63'-linked polyubiquitination. Phosphorylated by CHUK/IKKA leading to MAP3K14 destabilization. Autophosphorylated. In terms of processing, ubiquitinated. Undergoes both 'Lys-48'- and 'Lys-63'-linked polyubiquitination. 'Lys-48'-linked polyubiquitination leads to its degradation by the proteasome, while 'Lys-63'-linked polyubiquitination stabilizes and activates it.

It is found in the cytoplasm. It catalyses the reaction L-seryl-[protein] + ATP = O-phospho-L-seryl-[protein] + ADP + H(+). The enzyme catalyses L-threonyl-[protein] + ATP = O-phospho-L-threonyl-[protein] + ADP + H(+). Functionally, lymphotoxin beta-activated kinase which seems to be exclusively involved in the activation of NF-kappa-B and its transcriptional activity. Phosphorylates CHUK/IKKA. Promotes proteolytic processing of NFKB2/P100, which leads to activation of NF-kappa-B via the non-canonical pathway. Has an essential role in the non-canonical NF-kappa-B signalining that regulates genes encoding molecules involved in B-cell survival, lymphoid organogenesis, and immune response. Could act in a receptor-selective manner. The sequence is that of Mitogen-activated protein kinase kinase kinase 14 from Mus musculus (Mouse).